Here is a 997-residue protein sequence, read N- to C-terminus: Kinesin-like protein KIF19 (997 aa).

Positions 11 to 346 (QLMVALRVRP…LTYAGRAKNI (336 aa)) constitute a Kinesin motor domain. 104 to 111 (GPTGCGKT) contributes to the ATP binding site. Positions 361–388 (IAQYTSIIADLRGEIQRLKCKIDQQAGR) form a coiled coil. The span at 477 to 494 (EERRKESYTKEDSEKDSD) shows a compositional bias: basic and acidic residues. 4 disordered regions span residues 477-509 (EERRKESYTKEDSEKDSDTGDEPDNLEPPEVAS), 665-704 (KITPAGATLTPDSDLESVKTLSSEAQRPQNNTLPPLGTDS), 718-759 (QVKS…SSEN), and 784-997 (AAQR…LQHN). A coiled-coil region spans residues 506 to 551 (EVASARENIAALVGEQKKLRKEKLALEQRCRELRARGRRLEETLPR). Residues 683–697 (KTLSSEAQRPQNNTL) show a composition bias toward polar residues. The segment covering 750–759 (INSSPESSEN) has biased composition (low complexity). Polar residues-rich tracts occupy residues 835-851 (TLQHAISEDNLSSSTGE) and 950-959 (PNQNTGSGNP).

This sequence belongs to the TRAFAC class myosin-kinesin ATPase superfamily. Kinesin family. Strongly expressed in the oviduct and trachea. Expressed in testis, lung, ovary and brain.

Its subcellular location is the cytoplasm. It localises to the cytoskeleton. It is found in the cell projection. The protein localises to the cilium. Plus end-directed microtubule-dependent motor protein that regulates the length of motile cilia by mediating depolymerization of microtubules at ciliary tips. This is Kinesin-like protein KIF19 (Kif19) from Mus musculus (Mouse).